A 325-amino-acid chain; its full sequence is ATP synthase gamma chain (325 aa).

Belongs to the ATPase gamma chain family. In terms of assembly, F-type ATPases have 2 components, CF(1) - the catalytic core - and CF(0) - the membrane proton channel. CF(1) has five subunits: alpha(3), beta(3), gamma(1), delta(1), epsilon(1). CF(0) has three main subunits: a, b and c.

Its subcellular location is the cell membrane. In terms of biological role, produces ATP from ADP in the presence of a proton gradient across the membrane. The gamma chain is believed to be important in regulating ATPase activity and the flow of protons through the CF(0) complex. This chain is ATP synthase gamma chain, found in Corynebacterium urealyticum (strain ATCC 43042 / DSM 7109).